Reading from the N-terminus, the 286-residue chain is UDP-3-O-acyl-N-acetylglucosamine deacetylase (286 aa).

Zn(2+)-binding residues include His-79, His-237, and Asp-241. Residue His-264 is the Proton donor of the active site.

It belongs to the LpxC family. The cofactor is Zn(2+).

The catalysed reaction is a UDP-3-O-[(3R)-3-hydroxyacyl]-N-acetyl-alpha-D-glucosamine + H2O = a UDP-3-O-[(3R)-3-hydroxyacyl]-alpha-D-glucosamine + acetate. Its pathway is glycolipid biosynthesis; lipid IV(A) biosynthesis; lipid IV(A) from (3R)-3-hydroxytetradecanoyl-[acyl-carrier-protein] and UDP-N-acetyl-alpha-D-glucosamine: step 2/6. Its function is as follows. Catalyzes the hydrolysis of UDP-3-O-myristoyl-N-acetylglucosamine to form UDP-3-O-myristoylglucosamine and acetate, the committed step in lipid A biosynthesis. The sequence is that of UDP-3-O-acyl-N-acetylglucosamine deacetylase from Chlamydia trachomatis serovar A (strain ATCC VR-571B / DSM 19440 / HAR-13).